The chain runs to 311 residues: E3 ubiquitin-protein ligase RNF126 (311 aa).

Zn(2+) is bound by residues cysteine 13, cysteine 16, cysteine 29, and cysteine 32. Residues cysteine 13–cysteine 32 form a C4-type zinc finger. Disordered regions lie at residues glutamate 42–serine 62 and glycine 95–alanine 133. Over residues glutamate 101–serine 114 the composition is skewed to basic and acidic residues. Over residues proline 123–alanine 133 the composition is skewed to basic residues. Residues cysteine 227 to arginine 268 form an RING-type zinc finger. The interval glutamine 274 to serine 311 is disordered. Residues serine 289–serine 300 show a composition bias toward low complexity. Over residues proline 301 to serine 311 the composition is skewed to polar residues.

It localises to the cytoplasm. The protein localises to the nucleus. The enzyme catalyses S-ubiquitinyl-[E2 ubiquitin-conjugating enzyme]-L-cysteine + [acceptor protein]-L-lysine = [E2 ubiquitin-conjugating enzyme]-L-cysteine + N(6)-ubiquitinyl-[acceptor protein]-L-lysine.. Its pathway is protein modification; protein ubiquitination. E3 ubiquitin-protein ligase that mediates ubiquitination oF target proteins. Depending on the associated E2 ligase, mediates 'Lys-27'-, 'Lys-29'-, 'Lys-48'- and/or 'Lys-63'-linked polyubiquitination of substrates. Part of a BAG6-dependent quality control process ensuring that proteins of the secretory pathway that are mislocalized to the cytosol are degraded by the proteasome. Probably acts by providing the ubiquitin ligase activity associated with the BAG6 complex and be responsible for ubiquitination of the hydrophobic mislocalized proteins and their targeting to the proteasome. The chain is E3 ubiquitin-protein ligase RNF126 from Xenopus tropicalis (Western clawed frog).